The chain runs to 174 residues: RNA pyrophosphohydrolase (174 aa).

Positions 6 to 149 constitute a Nudix hydrolase domain; the sequence is GFRANVGIII…KRDVYRKVMK (144 aa). Positions 38-59 match the Nudix box motif; the sequence is GGVDDGESAEEAMYRELYEEVG.

It belongs to the Nudix hydrolase family. RppH subfamily. Requires a divalent metal cation as cofactor.

Its function is as follows. Accelerates the degradation of transcripts by removing pyrophosphate from the 5'-end of triphosphorylated RNA, leading to a more labile monophosphorylated state that can stimulate subsequent ribonuclease cleavage. In Shewanella oneidensis (strain ATCC 700550 / JCM 31522 / CIP 106686 / LMG 19005 / NCIMB 14063 / MR-1), this protein is RNA pyrophosphohydrolase.